Here is a 463-residue protein sequence, read N- to C-terminus: ATP synthase subunit beta (463 aa).

151–158 serves as a coordination point for ATP; sequence GGAGVGKT.

This sequence belongs to the ATPase alpha/beta chains family. As to quaternary structure, F-type ATPases have 2 components, CF(1) - the catalytic core - and CF(0) - the membrane proton channel. CF(1) has five subunits: alpha(3), beta(3), gamma(1), delta(1), epsilon(1). CF(0) has three main subunits: a(1), b(2) and c(9-12). The alpha and beta chains form an alternating ring which encloses part of the gamma chain. CF(1) is attached to CF(0) by a central stalk formed by the gamma and epsilon chains, while a peripheral stalk is formed by the delta and b chains.

It localises to the cell membrane. The catalysed reaction is ATP + H2O + 4 H(+)(in) = ADP + phosphate + 5 H(+)(out). Its function is as follows. Produces ATP from ADP in the presence of a proton gradient across the membrane. The catalytic sites are hosted primarily by the beta subunits. The chain is ATP synthase subunit beta from Clostridium botulinum (strain ATCC 19397 / Type A).